The following is a 387-amino-acid chain: MSSKVYSTGSRAKDHQPSGPECLPLPEANAEAIDFLSSLHKEELQMLFFSETLAMVSDTGEPQGELTIEVQRGKYQEKLGMLTYCLFVHASSRGFLDKMLCGNSLLGYLSEKLELMEQHSQDFIKFLILPMERKMSLLKQDDQLAVTRSIKEGEEVKTGVTSFPWSSIKGFISEAANLVLLRVMAWRRMVPSNARFLTLDTEGKLCYLTYQNLGFQTIQVDHQQAEVFIVEQTVHAEEGIPMSCQYYLLSDGHLAKRIQVGSPGCCIITKMPILREEDEIEPRPVFEKKPLVWEEDMELYSKFLDRKEELRLGHASYLRQHPEAHALISDFLLFLLLRQPEDVVTFAAEFFGPFDPWRPSSPALGSSHRPNPFRSLEPEGDARSGAA.

Residues 1-10 (MSSKVYSTGS) are compositionally biased toward polar residues. Disordered regions lie at residues 1–21 (MSSK…SGPE) and 361–387 (SPAL…SGAA). Residues 376–387 (LEPEGDARSGAA) show a composition bias toward basic and acidic residues.

This sequence belongs to the CATIP family. Interacts with TTC17. Strongly expressed in round and elongating spermatids, weakly in pachytene spermatocytes. Expressed in Leydig cells (at protein level). Expressed in testis, placenta, prostate and lung, and moderately in ovary and brain.

The protein localises to the nucleus. It is found in the cytoplasm. It localises to the cell membrane. The protein resides in the cytoskeleton. Plays a role in primary ciliogenesis by modulating actin polymerization. This chain is Ciliogenesis-associated TTC17-interacting protein (CATIP), found in Homo sapiens (Human).